Here is a 456-residue protein sequence, read N- to C-terminus: Adenylyltransferase and sulfurtransferase uba4 (456 aa).

Residues glycine 101, aspartate 122, 129–133, lysine 146, and 161–162 each bind ATP; these read SNLHR and DH. Zn(2+)-binding residues include cysteine 210 and cysteine 213. Cysteine 227 (glycyl thioester intermediate; for adenylyltransferase activity) is an active-site residue. Zn(2+)-binding residues include cysteine 300 and cysteine 303. The Rhodanese domain maps to 350-454; sequence KEKEHLLIDV…WKEQVDGSWP (105 aa). Cysteine 409 (cysteine persulfide intermediate; for sulfurtransferase activity) is an active-site residue.

It in the N-terminal section; belongs to the HesA/MoeB/ThiF family. UBA4 subfamily. The cofactor is Zn(2+).

Its subcellular location is the cytoplasm. The protein localises to the cytosol. It carries out the reaction [molybdopterin-synthase sulfur-carrier protein]-C-terminal Gly-Gly + ATP + H(+) = [molybdopterin-synthase sulfur-carrier protein]-C-terminal Gly-Gly-AMP + diphosphate. The enzyme catalyses [molybdopterin-synthase sulfur-carrier protein]-C-terminal Gly-Gly-AMP + S-sulfanyl-L-cysteinyl-[cysteine desulfurase] + AH2 = [molybdopterin-synthase sulfur-carrier protein]-C-terminal-Gly-aminoethanethioate + L-cysteinyl-[cysteine desulfurase] + A + AMP + 2 H(+). It participates in tRNA modification; 5-methoxycarbonylmethyl-2-thiouridine-tRNA biosynthesis. Plays a central role in 2-thiolation of mcm(5)S(2)U at tRNA wobble positions of cytosolic tRNA(Lys), tRNA(Glu) and tRNA(Gln). Also essential during biosynthesis of the molybdenum cofactor. Acts by mediating the C-terminal thiocarboxylation of sulfur carriers urm1 and mocs2a. Its N-terminus first activates urm1 and mocs2a as acyl-adenylates (-COAMP), then the persulfide sulfur on the catalytic cysteine is transferred to urm1 and mocs2a to form thiocarboxylation (-COSH) of their C-terminus. The reaction probably involves hydrogen sulfide that is generated from the persulfide intermediate and that acts as a nucleophile towards urm1 and mocs2a. Subsequently, a transient disulfide bond is formed. Does not use thiosulfate as sulfur donor; nfs1 probably acting as a sulfur donor for thiocarboxylation reactions. The chain is Adenylyltransferase and sulfurtransferase uba4 from Sclerotinia sclerotiorum (strain ATCC 18683 / 1980 / Ss-1) (White mold).